The chain runs to 38 residues: Photosystem II reaction center protein L (38 aa).

The helical transmembrane segment at 17–37 (SLYWGLLLIFVLAVLFSNYSF) threads the bilayer.

It belongs to the PsbL family. PSII is composed of 1 copy each of membrane proteins PsbA, PsbB, PsbC, PsbD, PsbE, PsbF, PsbH, PsbI, PsbJ, PsbK, PsbL, PsbM, PsbT, PsbX, PsbY, PsbZ, Psb30/Ycf12, at least 3 peripheral proteins of the oxygen-evolving complex and a large number of cofactors. It forms dimeric complexes.

It localises to the plastid. The protein resides in the chloroplast thylakoid membrane. Functionally, one of the components of the core complex of photosystem II (PSII). PSII is a light-driven water:plastoquinone oxidoreductase that uses light energy to abstract electrons from H(2)O, generating O(2) and a proton gradient subsequently used for ATP formation. It consists of a core antenna complex that captures photons, and an electron transfer chain that converts photonic excitation into a charge separation. This subunit is found at the monomer-monomer interface and is required for correct PSII assembly and/or dimerization. The chain is Photosystem II reaction center protein L from Bowenia serrulata (Byfield fern).